A 188-amino-acid chain; its full sequence is Large ribosomal subunit protein eL18 (188 aa).

Lysine 119 participates in a covalent cross-link: Glycyl lysine isopeptide (Lys-Gly) (interchain with G-Cter in SUMO2). Position 130 is a phosphoserine (serine 130). Positions 150 to 188 (RHFGKAPGTPHSHTKPYVRSKGRKFERARGRRASRGYKN) are disordered. Phosphothreonine is present on threonine 158. Basic residues-rich tracts occupy residues 161–171 (SHTKPYVRSKG) and 178–188 (RGRRASRGYKN). Lysine 164 is covalently cross-linked (Glycyl lysine isopeptide (Lys-Gly) (interchain with G-Cter in SUMO2)).

It belongs to the eukaryotic ribosomal protein eL18 family. In terms of assembly, component of the large ribosomal subunit.

Its subcellular location is the cytoplasm. It localises to the cytosol. The protein resides in the rough endoplasmic reticulum. In terms of biological role, component of the large ribosomal subunit. The ribosome is a large ribonucleoprotein complex responsible for the synthesis of proteins in the cell. The chain is Large ribosomal subunit protein eL18 (RPL18) from Bos taurus (Bovine).